The sequence spans 39 residues: Photosystem II reaction center protein J (39 aa).

A helical membrane pass occupies residues 7 to 27 (IPLWLVATVAGMGVITLLGIF).

Belongs to the PsbJ family. PSII is composed of 1 copy each of membrane proteins PsbA, PsbB, PsbC, PsbD, PsbE, PsbF, PsbH, PsbI, PsbJ, PsbK, PsbL, PsbM, PsbT, PsbX, PsbY, PsbZ, Psb30/Ycf12, peripheral proteins PsbO, CyanoQ (PsbQ), PsbU, PsbV and a large number of cofactors. It forms dimeric complexes.

It is found in the cellular thylakoid membrane. In terms of biological role, one of the components of the core complex of photosystem II (PSII). PSII is a light-driven water:plastoquinone oxidoreductase that uses light energy to abstract electrons from H(2)O, generating O(2) and a proton gradient subsequently used for ATP formation. It consists of a core antenna complex that captures photons, and an electron transfer chain that converts photonic excitation into a charge separation. The chain is Photosystem II reaction center protein J from Cyanothece sp. (strain PCC 7425 / ATCC 29141).